Here is a 300-residue protein sequence, read N- to C-terminus: L-threonine kinase (300 aa).

92-102 (PVAKGMASSTA) is an ATP binding site.

This sequence belongs to the GHMP kinase family. PduX subfamily.

It localises to the cytoplasm. It carries out the reaction L-threonine + ATP = O-phospho-L-threonine + ADP + H(+). Its pathway is cofactor biosynthesis; adenosylcobalamin biosynthesis. The protein operates within polyol metabolism; 1,2-propanediol degradation. Its function is as follows. L-threonine kinase that catalyzes the conversion of L-threonine to L-threonine-O-3-phosphate. Involved in the de novo synthesis of adenosylcobalamin (coenzyme B12) and the assimilation of cobyric acid. Uses ATP; the activity with CTP, GTP or UTP is 6, 11, and 3% of the activity with ATP, respectively. In terms of biological role, the 1,2-propanediol (1,2-PD)-specific bacterial microcompartment (BMC) concentrates low levels of 1,2-PD catabolic enzymes, concentrates volatile reaction intermediates thus enhancing pathway flux and keeps the level of toxic, mutagenic propionaldehyde low. This gene probably benefits from its induction via the Pdu promoter, rather than a physical interaction with the BMC. This chain is L-threonine kinase, found in Salmonella typhimurium (strain LT2 / SGSC1412 / ATCC 700720).